We begin with the raw amino-acid sequence, 359 residues long: Putative ankyrin repeat protein R190 (359 aa).

7 ANK repeats span residues 72 to 103 (RLME…DFRC), 105 to 133 (DCVI…DLNR), 142 to 173 (DEII…SISI), 203 to 234 (LGNL…DINN), 236 to 260 (HEYS…YGLI), 261 to 287 (IHDD…IGHK), and 288 to 317 (PSKQ…DLSD).

The polypeptide is Putative ankyrin repeat protein R190 (Acanthamoeba polyphaga (Amoeba)).